We begin with the raw amino-acid sequence, 387 residues long: F-box/LRR-repeat/kelch-repeat protein At2g29770 (387 aa).

The disordered stretch occupies residues 1–34 (MVFISETSDDGSNGGDPTKNPQEEEEENLPPIPQ). One can recognise an F-box domain in the interval 31 to 78 (PIPQGIPDELIESTVLLIRRCHYPTLSLLSKTFRRVISSSELYKSRFI). One copy of the LRR 1 repeat lies at 105 to 128 (CNIPRNISLHLREIKSLPPLNHGS). 2 Kelch repeats span residues 136-183 (HMYV…VIDG) and 184-231 (RIYV…FVTS). The LRR 2 repeat unit spans residues 196–219 (DHWIEVFDIENRIWSSVPHHRYCN).

This chain is F-box/LRR-repeat/kelch-repeat protein At2g29770, found in Arabidopsis thaliana (Mouse-ear cress).